The sequence spans 84 residues: uncharacterized protein (84 aa).

This is an uncharacterized protein from Caenorhabditis elegans.